Here is a 244-residue protein sequence, read N- to C-terminus: ATP-dependent Clp protease ATP-binding subunit CLPT4, chloroplastic (244 aa).

The N-terminal 64 residues, 1–64 (MQALQASRLT…WRSSGRVITR (64 aa)), are a transit peptide targeting the chloroplast. Over residues 30 to 48 (SRPISSGVSSSQELSSRSS) the composition is skewed to low complexity. Disordered regions lie at residues 30 to 55 (SRPISSGVSSSQELSSRSSAPATKSW) and 220 to 244 (GRRYQLPDETEEAGPLKSEDDVSFL).

The protein belongs to the ClpA/ClpB family.

The protein localises to the plastid. Its subcellular location is the chloroplast. Functionally, accessory protein regulating the assembly of the plastid Clp protease system. In Chlamydomonas reinhardtii (Chlamydomonas smithii), this protein is ATP-dependent Clp protease ATP-binding subunit CLPT4, chloroplastic.